Here is a 118-residue protein sequence, read N- to C-terminus: Small ribosomal subunit protein uS13 (118 aa).

The segment at 91-118 (HRHSLPVRGQRTKTNARTRKGPRKPIRK) is disordered.

The protein belongs to the universal ribosomal protein uS13 family. Part of the 30S ribosomal subunit. Forms a loose heterodimer with protein S19. Forms two bridges to the 50S subunit in the 70S ribosome.

Functionally, located at the top of the head of the 30S subunit, it contacts several helices of the 16S rRNA. In the 70S ribosome it contacts the 23S rRNA (bridge B1a) and protein L5 of the 50S subunit (bridge B1b), connecting the 2 subunits; these bridges are implicated in subunit movement. Contacts the tRNAs in the A and P-sites. The sequence is that of Small ribosomal subunit protein uS13 from Hahella chejuensis (strain KCTC 2396).